We begin with the raw amino-acid sequence, 78 residues long: Acyl carrier protein (78 aa).

In terms of domain architecture, Carrier spans 2–77 (SNIEERVKKI…AAIDYVTSNA (76 aa)). Residue serine 37 is modified to O-(pantetheine 4'-phosphoryl)serine.

It belongs to the acyl carrier protein (ACP) family. In terms of processing, 4'-phosphopantetheine is transferred from CoA to a specific serine of apo-ACP by AcpS. This modification is essential for activity because fatty acids are bound in thioester linkage to the sulfhydryl of the prosthetic group.

It localises to the cytoplasm. Its pathway is lipid metabolism; fatty acid biosynthesis. In terms of biological role, carrier of the growing fatty acid chain in fatty acid biosynthesis. This Vibrio cholerae serotype O1 (strain ATCC 39315 / El Tor Inaba N16961) protein is Acyl carrier protein.